The sequence spans 280 residues: Nucleotide-binding protein Swoo_4243 (280 aa).

ATP is bound at residue 8–15 (GRSGSGKS). 56–59 (DVRN) serves as a coordination point for GTP.

Belongs to the RapZ-like family.

Displays ATPase and GTPase activities. This Shewanella woodyi (strain ATCC 51908 / MS32) protein is Nucleotide-binding protein Swoo_4243.